Reading from the N-terminus, the 184-residue chain is Chromobox protein homolog hpl-1 (184 aa).

The segment covering Met1–Asn13 has biased composition (polar residues). Disordered stretches follow at residues Met1–Pro27 and Ala87–Asp115. Residues Phe37 to Arg95 enclose the Chromo domain. Over residues Pro99–Asp115 the composition is skewed to polar residues.

Interacts with histone demethylase spr-5. Interacts with chromobox protein homolog hpl-2. Interacts with histone H3 tails methylated at 'Lys-9' (H3K9me3) and 'Lys-23'(H3K23me2). Interacts with histone H1 variant his-24 (when monomethylated at 'Lys-14'); the interaction is direct. May interact with the REST corepressor rcor-1, histone deacetylase hda-1, and the histone demethylase lsd-1.

Its subcellular location is the nucleus. In terms of biological role, seems to be involved in transcriptional silencing in heterochromatin-like complexes. Involved in epigenetic repression. Probably does not act as global transcriptional repressor. Plays a role in linking epigenetic regulation with the innate immune response. Acting in concert with chromobox protein homolog hpl-2 and histone H1 protein his-24, involved in reproduction, somatic gonad development, male tail development and vulval cell fate decisions; perhaps as a result of modulating expression of Hox genes mab-5 and egl-5. Role in growth and somatic gonad development is antagonized by histone-lysine N-methyltransferase set-2/SET1. Required for larval development, acting redundantly with hpl-2. Plays a role in the formation of the vulva and in fertility, acting together with a CoREST-like complex, and hpl-2. In Caenorhabditis elegans, this protein is Chromobox protein homolog hpl-1.